The chain runs to 215 residues: Cytidylate kinase (215 aa).

10–18 (GPAASGKGT) serves as a coordination point for ATP.

It belongs to the cytidylate kinase family. Type 1 subfamily.

Its subcellular location is the cytoplasm. It catalyses the reaction CMP + ATP = CDP + ADP. It carries out the reaction dCMP + ATP = dCDP + ADP. This Bartonella bacilliformis (strain ATCC 35685 / KC583 / Herrer 020/F12,63) protein is Cytidylate kinase.